The following is a 240-amino-acid chain: Terpene cyclase cdmG (240 aa).

A run of 6 helical transmembrane segments spans residues 16 to 36 (YASI…LNYG), 48 to 68 (YGMA…YTVI), 78 to 98 (IIMT…IKFA), 112 to 132 (IPFI…ALAA), 134 to 154 (VGPG…LTIG), and 167 to 187 (GVSY…VICV). Residue Asn197 is glycosylated (N-linked (GlcNAc...) asparagine). The helical transmembrane segment at 205–225 (IMKCFSGISLAVEIVYGVTLW) threads the bilayer.

Belongs to the paxB family.

The protein resides in the membrane. It carries out the reaction verruculide C epoxide = 3-hydroxypentacecilide A. It participates in secondary metabolite biosynthesis; terpenoid biosynthesis. Functionally, terpene cyclase; part of the gene cluster that mediates the biosynthesis of chrodrimanin B, a meroterpenoid that acts as a potent blocker of insect GABA-gated chloride channels. The first step of the pathway is the biosynthesis of 6-hydroxymellein by the polyketide synthase cdmE. The prenyltransferase cdmH acts as a 6-hydroxymellein 5-farnesyltransferase and produces the hydrophobic metabolite verruculide C. The FAD-dependent monooxygenase cdmI further converts verruculide C into verruculide B. The terpene cyclase cdmG then produced the pentacyclic molecule 3-hydroxypentacecilide A, the backbone structure of chrodrimanin B, via folding the farnesyl moiety of the substrate into the chair-boat conformation. The short-chain dehydrogenase/reductase cdmF functions as the 3-OH dehydrogenase that oxidizes the C-3 hydroxyl group of 3-hydroxypentacecilide A and produces chrodrimanin C, the dehydrogenated product of 3-hydroxypentacecilide A. The cytochrome P450 monooxygenase cdmJ then accepts both 3-hydroxypentacecilide A and chrodrimanin C and functions as a C-7-beta-hydroxylase to produce respectively chrodrimanin H and chrodrimanin F. The dioxygenase cdmA accepts chrodrimanin H to afford chrodrimanin E, which is further transformed to chrodrimanin A by the dioxygenase cdmD. CdmA can also accept chrodrimanin C as substrate to convert it into verruculide A, which is further converted into chrodrimanin T by cdmD. The last step of the biosynthesis is proposed to be performed by the acetyltransferase cdmC which acetylates chrodrimanin A to yield chrodrimanin B. The pathway may also lead to the production of additional shunt products, including chrodrimanins T and U. The chain is Terpene cyclase cdmG from Talaromyces verruculosus (Penicillium verruculosum).